The chain runs to 416 residues: Tumor necrosis factor receptor superfamily member 19 (416 aa).

The signal sequence occupies residues 1–29 (MALKVLPLHRTVLFAAILFLLHLACKVSC). Residues 30-170 (ETGDCRQQEF…TVSSPRDTAL (141 aa)) are Extracellular-facing. TNFR-Cys repeat units lie at residues 33 to 72 (DCRQ…DAQC) and 74 to 114 (PCRP…DAVC). Intrachain disulfides connect C34–C46, C49–C62, C52–C72, C75–C89, C92–C106, C95–C114, C117–C135, and C138–C149. Residue N105 is glycosylated (N-linked (GlcNAc...) asparagine). A TNFR-Cys 3; truncated repeat occupies 116–149 (DCLPGFYRKTKLVGFQDMECVPCGDPPPPYEPHC). Residues 171–191 (AAVICSALATVLLALLILCVI) traverse the membrane as a helical segment. The Cytoplasmic portion of the chain corresponds to 192–416 (YCKRQFMEKK…LAMPTAFQDA (225 aa)). The disordered stretch occupies residues 321 to 416 (LCDSYPELTG…LAMPTAFQDA (96 aa)). 3 stretches are compositionally biased toward polar residues: residues 331-351 (EDTN…SSGG), 360-370 (LESSGNVSEST), and 381-396 (VWEQ…TPSQ).

Associates with TRAF1, TRAF2, TRAF3 and TRAF5. Interacts with LINGO1. Highly expressed in adult brain, and in embryos from day 11-17, but not earlier. Detected in embryonic brain and epithelium, and at lower levels in adult heart, lung and liver. In neonatal mice, mainly in hair follicles and neuron-like cells in the cerebellum, but not in the skin epidermis. Isoform 3 was found in embryonic day 17.5 skin but not in brain and liver.

Its subcellular location is the cell membrane. The protein resides in the secreted. Can mediate activation of c-Jun and NF-kappa-B. May promote caspase-independent cell death. Isoform 2 and isoform 3 may act as decoy receptors. In Mus musculus (Mouse), this protein is Tumor necrosis factor receptor superfamily member 19 (Tnfrsf19).